A 575-amino-acid polypeptide reads, in one-letter code: DNA mismatch repair protein MutL (575 aa).

The protein belongs to the DNA mismatch repair MutL/HexB family.

In terms of biological role, this protein is involved in the repair of mismatches in DNA. It is required for dam-dependent methyl-directed DNA mismatch repair. May act as a 'molecular matchmaker', a protein that promotes the formation of a stable complex between two or more DNA-binding proteins in an ATP-dependent manner without itself being part of a final effector complex. This is DNA mismatch repair protein MutL from Coxiella burnetii (strain CbuG_Q212) (Coxiella burnetii (strain Q212)).